Here is a 132-residue protein sequence, read N- to C-terminus: T-cell receptor alpha chain V region CTL-F3 (132 aa).

The first 22 residues, 1–22 (MNMRPDTCSVLVLLLMLRRNNG), serve as a signal peptide directing secretion. A v segment region spans residues 23–114 (DSVTQTEGLV…DSALYYCALS (92 aa)). N-linked (GlcNAc...) asparagine glycosylation occurs at Asn-43. Cysteines 44 and 111 form a disulfide. Residues 115–132 (NAGAKLTFGGGTRLTVRP) are j segment.

The polypeptide is T-cell receptor alpha chain V region CTL-F3 (Mus musculus (Mouse)).